The sequence spans 127 residues: Anti-adapter protein IraD (127 aa).

It belongs to the GpW/Gp25 family. IraD subfamily. In terms of assembly, interacts with RssB.

It is found in the cytoplasm. Its function is as follows. Inhibits RpoS proteolysis by regulating RssB activity, thereby increasing the stability of the sigma stress factor RpoS during oxidative stress. Its effect on RpoS stability is due to its interaction with RssB, which probably blocks the interaction of RssB with RpoS, and the consequent delivery of the RssB-RpoS complex to the ClpXP protein degradation pathway. The polypeptide is Anti-adapter protein IraD (Escherichia coli O6:H1 (strain CFT073 / ATCC 700928 / UPEC)).